We begin with the raw amino-acid sequence, 271 residues long: Aquaporin-1 (271 aa).

The Cytoplasmic portion of the chain corresponds to 1-11 (MASEFKKKLFW). A helical transmembrane segment spans residues 12 to 29 (RAVVAEFLAMILFIFISI). The Extracellular segment spans residues 30–48 (GSALGFHYPIKSNQTTGAV). A glycan (N-linked (GlcNAc...) asparagine) is linked at Asn42. The helical transmembrane segment at 49–67 (QDNVKVSLAFGLSIATLAQ) threads the bilayer. The Cytoplasmic segment spans residues 68-70 (SVG). An intramembrane segment occupies 71–84 (HISGAHLNPAVTLG). The short motif at 78-80 (NPA) is the NPA 1 element. Topologically, residues 85–92 (LLLSCQIS) are cytoplasmic. A helical membrane pass occupies residues 93–111 (VLRAIMYIIAQCVGAIVAT). Over 112–135 (AILSGITSSLPDNSLGLNALAPGV) the chain is Extracellular. Residues 136-155 (NSGQGLGIEIIGTLQLVLCV) traverse the membrane as a helical segment. Over 156-165 (LATTDRRRRD) the chain is Cytoplasmic. Residues 166–183 (LGGSGPLAIGFSVALGHL) traverse the membrane as a helical segment. At 184–188 (LAIDY) the chain is on the extracellular side. Residues 189–201 (TGCGINPARSFGS) lie within the membrane without spanning it. The short motif at 194–196 (NPA) is the NPA 2 element. At 202-208 (SVITHNF) the chain is on the extracellular side. The chain crosses the membrane as a helical span at residues 209 to 226 (QDHWIFWVGPFIGAALAV). Residues 227–271 (LIYDFILAPRSSDLTDRVKVWTSGQVEEYDLDADDINSRVEMKPK) are Cytoplasmic-facing. Ser249 bears the Phosphoserine mark. The residue at position 255 (Tyr255) is a Phosphotyrosine. At Ser264 the chain carries Phosphoserine.

Belongs to the MIP/aquaporin (TC 1.A.8) family. Homotetramer; each monomer provides an independent water pore. Component of the ankyrin-1 complex in the erythrocyte, composed of ANK1, RHCE, RHAG, SLC4A1, EPB42, GYPA, GYPB and AQP1. Interacts with EPHB2; involved in endolymph production in the inner ear. Identified in a complex with STOM. Interacts (via the N-terminal) with ANK1 (via ANK 1-5 repeats). Interacts (via the C-terminal) with EPB42.

The protein localises to the cell membrane. It catalyses the reaction H2O(in) = H2O(out). The enzyme catalyses nitric oxide(out) = nitric oxide(in). The catalysed reaction is CO2(out) = CO2(in). It carries out the reaction glycerol(in) = glycerol(out). It catalyses the reaction H2O2(out) = H2O2(in). The enzyme catalyses K(+)(in) = K(+)(out). The catalysed reaction is Na(+)(in) = Na(+)(out). Forms a water channel that facilitates the transport of water across cell membranes, playing a crucial role in water homeostasis in various tissues. Could also be permeable to small solutes including hydrogen peroxide, glycerol and gases such as amonnia (NH3), nitric oxide (NO) and carbon dioxide (CO2). Recruited to the ankyrin-1 complex, a multiprotein complex of the erythrocyte membrane, it could be part of a CO2 metabolon, linking facilitated diffusion of CO2 across the membrane, anion exchange of Cl(-)/HCO3(-) and interconversion of dissolved CO2 and carbonic acid in the cytosol. In vitro, it shows non-selective gated cation channel activity and may be permeable to cations like K(+) and Na(+) in vivo. This Bos taurus (Bovine) protein is Aquaporin-1.